Consider the following 142-residue polypeptide: Galectin-16 (142 aa).

The 133-residue stretch at 6 to 138 (VPYKLPVSLS…DVSLDSVLVN (133 aa)) folds into the Galectin domain.

In terms of tissue distribution, predominantly and highly expressed in the placenta where it is localized mainly in the syncytiotrophoblast and in the endothelia of fetal vessels. Also detected in the amnion and chorionic trophoblasts in fetal membranes.

Binds lactose with high affinity. Strong inducer of T-cell apoptosis. This Homo sapiens (Human) protein is Galectin-16.